A 417-amino-acid chain; its full sequence is Serine hydroxymethyltransferase (417 aa).

(6S)-5,6,7,8-tetrahydrofolate is bound by residues Leu122 and Gly126 to Leu128. An N6-(pyridoxal phosphate)lysine modification is found at Lys230. A (6S)-5,6,7,8-tetrahydrofolate-binding site is contributed by Ser355 to Phe357.

The protein belongs to the SHMT family. Homodimer. Requires pyridoxal 5'-phosphate as cofactor.

Its subcellular location is the cytoplasm. The enzyme catalyses (6R)-5,10-methylene-5,6,7,8-tetrahydrofolate + glycine + H2O = (6S)-5,6,7,8-tetrahydrofolate + L-serine. Its pathway is one-carbon metabolism; tetrahydrofolate interconversion. It functions in the pathway amino-acid biosynthesis; glycine biosynthesis; glycine from L-serine: step 1/1. In terms of biological role, catalyzes the reversible interconversion of serine and glycine with tetrahydrofolate (THF) serving as the one-carbon carrier. This reaction serves as the major source of one-carbon groups required for the biosynthesis of purines, thymidylate, methionine, and other important biomolecules. Also exhibits THF-independent aldolase activity toward beta-hydroxyamino acids, producing glycine and aldehydes, via a retro-aldol mechanism. This chain is Serine hydroxymethyltransferase, found in Francisella tularensis subsp. holarctica (strain LVS).